Here is a 426-residue protein sequence, read N- to C-terminus: Phosphoribosylamine--glycine ligase (426 aa).

Positions 109–312 constitute an ATP-grasp domain; sequence KEVMEAAGVA…LAGVLNAVAT (204 aa). 138-193 provides a ligand contact to ATP; that stretch reads LDYFGPMYVVKDDGLAAGKGVVVTADRAEARQHIHLVHAAGNPVLLESFLDGPEVS. The Mg(2+) site is built by Glu-282 and Asn-284.

Belongs to the GARS family. Requires Mg(2+) as cofactor. It depends on Mn(2+) as a cofactor.

The enzyme catalyses 5-phospho-beta-D-ribosylamine + glycine + ATP = N(1)-(5-phospho-beta-D-ribosyl)glycinamide + ADP + phosphate + H(+). It functions in the pathway purine metabolism; IMP biosynthesis via de novo pathway; N(1)-(5-phospho-D-ribosyl)glycinamide from 5-phospho-alpha-D-ribose 1-diphosphate: step 2/2. The sequence is that of Phosphoribosylamine--glycine ligase from Corynebacterium ammoniagenes (Brevibacterium ammoniagenes).